The chain runs to 121 residues: Apoptin (121 aa).

Disordered stretches follow at residues 1-28 (MNAL…LETP) and 57-121 (LRSA…CIRL). The span at 58–70 (RSATADNSESTGF) shows a compositional bias: polar residues. Positions 88–102 (RSCDPSEYRVSELKE) are enriched in basic and acidic residues.

This sequence belongs to the gyrovirus apoptin family.

The protein localises to the host nucleus. Its function is as follows. May act as transcriptional regulator. Induces apoptosis in infected cells. Element of infectious replication cycle. In Gallus gallus (Chicken), this protein is Apoptin (VP3).